The sequence spans 243 residues: MKNIRFDVEYDGTDFCGWQRQPGGIQTLQGELEAQLGRILQENISLTAAGRTDKGVHARLQVVNFMTGSAMELSKMAHALNSLLPDTVRVSNPHVVPLDFHARFSAKEREYRYFLLEEPSALRCRFTGCSKGSLHIGVMQDAAGLLVGEHDFLLLSKEPADKKNPVCLIKECEWQEENGVFVFRIRANRFLRSMVRYLVGVMIAVGRGRAVPEDLGMLLDDGLMTFPLFPAEPNGLFLWDVSY.

The Nucleophile role is filled by Asp-53. Tyr-111 is a binding site for substrate.

The protein belongs to the tRNA pseudouridine synthase TruA family. In terms of assembly, homodimer.

The catalysed reaction is uridine(38/39/40) in tRNA = pseudouridine(38/39/40) in tRNA. Its function is as follows. Formation of pseudouridine at positions 38, 39 and 40 in the anticodon stem and loop of transfer RNAs. The polypeptide is tRNA pseudouridine synthase A (Chlorobium limicola (strain DSM 245 / NBRC 103803 / 6330)).